A 524-amino-acid chain; its full sequence is Phosphoenolpyruvate carboxykinase (ATP) (524 aa).

Substrate is bound by residues Arg-52, Tyr-188, and Lys-194. Residues Lys-194, His-213, and 229–237 (GLSGTGKTT) contribute to the ATP site. Mn(2+) contacts are provided by Lys-194 and His-213. Asp-250 provides a ligand contact to Mn(2+). 3 residues coordinate ATP: Glu-278, Arg-314, and Thr-439. Arg-314 lines the substrate pocket.

It belongs to the phosphoenolpyruvate carboxykinase (ATP) family. It depends on Mn(2+) as a cofactor.

The protein resides in the cytoplasm. The enzyme catalyses oxaloacetate + ATP = phosphoenolpyruvate + ADP + CO2. It functions in the pathway carbohydrate biosynthesis; gluconeogenesis. Functionally, involved in the gluconeogenesis. Catalyzes the conversion of oxaloacetate (OAA) to phosphoenolpyruvate (PEP) through direct phosphoryl transfer between the nucleoside triphosphate and OAA. In Campylobacter jejuni subsp. jejuni serotype O:23/36 (strain 81-176), this protein is Phosphoenolpyruvate carboxykinase (ATP).